Here is a 705-residue protein sequence, read N- to C-terminus: Elongation factor G 2 (705 aa).

Residues 8–290 (ELYRNIGISA…AVLDYLPSPL (283 aa)) form the tr-type G domain. GTP is bound by residues 17-24 (AHIDAGKT), 88-92 (DTPGH), and 142-145 (NKMD).

This sequence belongs to the TRAFAC class translation factor GTPase superfamily. Classic translation factor GTPase family. EF-G/EF-2 subfamily.

Its subcellular location is the cytoplasm. In terms of biological role, catalyzes the GTP-dependent ribosomal translocation step during translation elongation. During this step, the ribosome changes from the pre-translocational (PRE) to the post-translocational (POST) state as the newly formed A-site-bound peptidyl-tRNA and P-site-bound deacylated tRNA move to the P and E sites, respectively. Catalyzes the coordinated movement of the two tRNA molecules, the mRNA and conformational changes in the ribosome. This is Elongation factor G 2 from Bordetella avium (strain 197N).